A 1807-amino-acid chain; its full sequence is Integrin beta-4 (1807 aa).

The signal sequence occupies residues 1 to 27 (MAGLCSSPWVKLLLAVVLSAGLPGNMA). The Extracellular portion of the chain corresponds to 28–713 (NRCKKAQVKS…KKKDCLPAPS (686 aa)). A PSI domain is found at 29-73 (RCKKAQVKSCTECIRVDKSCAYCTDELFKERRCNTQADVLAAGCR). Cystine bridges form between cysteine 30–cysteine 48, cysteine 38–cysteine 456, cysteine 41–cysteine 61, cysteine 51–cysteine 72, cysteine 245–cysteine 288, cysteine 458–cysteine 477, cysteine 469–cysteine 480, and cysteine 482–cysteine 491. Residues 131–340 (DLYILMDFSN…SYYEKLHKYF (210 aa)) enclose the VWFA domain. Mg(2+) is bound by residues serine 139 and serine 141. Ca(2+) contacts are provided by serine 141, aspartate 144, aspartate 145, and aspartate 176. The tract at residues 194 to 199 (WPNSDP) is involved in NRG1- and IGF1-binding. Asparagine 228, aspartate 230, proline 232, and glutamate 233 together coordinate Ca(2+). Glutamate 233 contributes to the Mg(2+) binding site. Residue asparagine 327 is glycosylated (N-linked (GlcNAc...) asparagine). Glutamate 350 serves as a coordination point for Ca(2+). I-EGF domains are found at residues 458–492 (CELQ…KTCN), 493–538 (CSTG…HFCE), 539–575 (YDNF…RSCD), and 576–617 (CPLS…TTCE). Asparagine 492 carries N-linked (GlcNAc...) asparagine glycosylation. Disulfide bonds link cysteine 493/cysteine 521, cysteine 504/cysteine 519, cysteine 513/cysteine 524, cysteine 526/cysteine 537, cysteine 544/cysteine 558, cysteine 552/cysteine 563, cysteine 565/cysteine 574, cysteine 576/cysteine 599, cysteine 583/cysteine 597, cysteine 591/cysteine 602, and cysteine 604/cysteine 616. Residue asparagine 580 is glycosylated (N-linked (GlcNAc...) asparagine). An N-linked (GlcNAc...) asparagine glycan is attached at asparagine 619. 4 disulfides stabilise this stretch: cysteine 628-cysteine 673, cysteine 634-cysteine 653, cysteine 637-cysteine 650, and cysteine 682-cysteine 708. An N-linked (GlcNAc...) asparagine glycan is attached at asparagine 697. A helical membrane pass occupies residues 714–734 (WWLIPLLIFLLLLLVLLLLLC). Residues 734–751 (CWKYCACCKACLGLLPCC) are palmitoylated on several cysteines. The Cytoplasmic portion of the chain corresponds to 735 to 1807 (WKYCACCKAC…THMDQQFFQT (1073 aa)). A phosphoserine mark is found at serine 773, serine 1071, and serine 1121. In terms of domain architecture, Calx-beta spans 981–1086 (VNITIIKEQA…QVRRFQVQLS (106 aa)). The interval 1119–1141 (SASPPLPRGDLGAPQNPNAKAAG) is disordered. Fibronectin type-III domains follow at residues 1131 to 1220 (APQN…THQE) and 1224 to 1323 (EPGR…TQPK). Serine 1386, serine 1389, and serine 1405 each carry phosphoserine. Threonine 1418 is subject to Phosphothreonine. The residue at position 1425 (serine 1425) is a Phosphoserine. Position 1514 is a phosphothreonine (threonine 1514). Fibronectin type-III domains follow at residues 1514-1609 (TPTR…VHPQ) and 1627-1723 (APGP…SQDG). Serine 1776 carries the post-translational modification Phosphoserine.

It belongs to the integrin beta chain family. In terms of assembly, heterodimer of an alpha and a beta subunit. Beta-4 associates with alpha-6. Interacts (via cytoplasmic region) with COL17A1 (via cytoplasmic region). Interacts (via cytoplasmic region) with DST isoform 3 (via N-terminus). Interacts (via cytoplasmic domain) with DST (via N-terminus). Interacts with RAC1. ITGA6:ITGB4 is found in a ternary complex with NRG1 and ERBB3. ITGA6:ITGB4 is found in a ternary complex with IGF1 and IGF1R. ITGA6:ITGB4 interacts with IGF2. Interacts with TMEM268; this interaction prevents ITGB4 degradation. In terms of processing, palmitoylated by DHHC3 at several cysteines of the membrane-proximal region, enhancing stability and cell surface expression. Palmitoylation also promotes secondary association with tertaspanins.

The protein localises to the cell membrane. The protein resides in the cell junction. It is found in the hemidesmosome. Its function is as follows. Integrin alpha-6/beta-4 is a receptor for laminin. It plays a critical structural role in the hemidesmosome of epithelial cells. Is required for the regulation of keratinocyte polarity and motility. ITGA6:ITGB4 binds to NRG1 (via EGF domain) and this binding is essential for NRG1-ERBB signaling. ITGA6:ITGB4 binds to IGF1 and this binding is essential for IGF1 signaling. ITGA6:ITGB4 binds to IGF2 and this binding is essential for IGF2 signaling. This Rattus norvegicus (Rat) protein is Integrin beta-4 (Itgb4).